We begin with the raw amino-acid sequence, 106 residues long: uncharacterized protein (106 aa).

The segment at 38-106 (KGNKKSKAAT…STHLPYHGSY (69 aa)) is disordered. Composition is skewed to basic and acidic residues over residues 57-71 (TRQE…HRPE) and 82-96 (WKKE…KETS).

Its subcellular location is the mitochondrion. This is an uncharacterized protein from Arabidopsis thaliana (Mouse-ear cress).